Reading from the N-terminus, the 249-residue chain is Long form salivary protein D7L (249 aa).

The first 19 residues, 1 to 19, serve as a signal peptide directing secretion; that stretch reads MNAVITSLVFISLVGVGYS. Cystine bridges form between C36–C66 and C62–C112. W49 provides a ligand contact to thromboxane A2. W52 contributes to the leukotriene C4 binding site. Y63 serves as a coordination point for thromboxane A2. Positions 136 and 154 each coordinate leukotriene C4. K154 lines the thromboxane A2 pocket. 3 cysteine pairs are disulfide-bonded: C162/C178, C174/C221, and C211/C230.

Belongs to the PBP/GOBP family.

The protein resides in the secreted. In terms of biological role, modulates blood feeding of female sandflies on vertebrate species by binding and sequestering different mediators involved in the host response. Binds leukotriene C4, leukotriene D4, leukotriene E4 and U-46619, a stable analog of thromboxane A2. Does not bind histamine or serotonin. Inhibits platelet aggregation induced by low concentrations of collagen in thromboxane A2-dependent manner. The chain is Long form salivary protein D7L from Phlebotomus duboscqi (Sandfly).